We begin with the raw amino-acid sequence, 350 residues long: Bifunctional UDP-glucose 4-epimerase and UDP-xylose 4-epimerase 1 (350 aa).

NAD(+) is bound by residues 15 to 17 (GFI), 36 to 40 (DNFDN), 67 to 68 (DL), F89, and K93. Residue S133 participates in substrate binding. Y157 functions as the Proton acceptor in the catalytic mechanism. 2 residues coordinate NAD(+): K161 and Y185.

This sequence belongs to the NAD(P)-dependent epimerase/dehydratase family. NAD(+) is required as a cofactor.

It carries out the reaction UDP-alpha-D-glucose = UDP-alpha-D-galactose. It catalyses the reaction UDP-beta-L-arabinopyranose = UDP-alpha-D-xylose. It functions in the pathway carbohydrate metabolism; galactose metabolism. It participates in nucleotide-sugar biosynthesis; UDP-L-arabinose biosynthesis; UDP-L-arabinose from UDP-alpha-D-xylose: step 1/1. Its pathway is cell wall biogenesis; cell wall polysaccharide biosynthesis. With respect to regulation, inhibited by Hg(2+). Its function is as follows. Catalyzes the interconversion between UDP-glucose and UDP-galactose and the interconversion between UDP-arabinose and UDP-xylose. The sequence is that of Bifunctional UDP-glucose 4-epimerase and UDP-xylose 4-epimerase 1 from Pisum sativum (Garden pea).